The following is a 1756-amino-acid chain: Protein TIC 214 (1756 aa).

6 helical membrane-spanning segments follow: residues 18–38, 54–74, 79–99, 128–148, 163–183, and 210–230; these read VSGP…LPFG, GYGI…FLSM, IYAA…YMFF, LFMD…NPVL, ISFM…LTIF, and FSLL…LPFL. The segment at 1469-1504 is disordered; it reads KNKQVEDGQDKNGQVEDQDGQDQDGQVEDQQTDGKK. Over residues 1471-1482 the composition is skewed to basic and acidic residues; sequence KQVEDGQDKNGQ. Residues 1484–1499 show a composition bias toward acidic residues; it reads EDQDGQDQDGQVEDQQ.

It belongs to the TIC214 family. Part of the Tic complex.

It is found in the plastid. Its subcellular location is the chloroplast inner membrane. In terms of biological role, involved in protein precursor import into chloroplasts. May be part of an intermediate translocation complex acting as a protein-conducting channel at the inner envelope. This chain is Protein TIC 214, found in Pinus thunbergii (Japanese black pine).